Here is a 318-residue protein sequence, read N- to C-terminus: GTP cyclohydrolase MptA (318 aa).

It belongs to the GTP cyclohydrolase IV family. Homodimer. It depends on Fe(2+) as a cofactor.

The catalysed reaction is GTP + H2O = 7,8-dihydroneopterin 2',3'-cyclic phosphate + formate + diphosphate + H(+). It participates in cofactor biosynthesis; 5,6,7,8-tetrahydromethanopterin biosynthesis. In terms of biological role, converts GTP to 7,8-dihydro-D-neopterin 2',3'-cyclic phosphate, the first intermediate in the biosynthesis of coenzyme methanopterin. The polypeptide is GTP cyclohydrolase MptA (Methanothermobacter thermautotrophicus (strain ATCC 29096 / DSM 1053 / JCM 10044 / NBRC 100330 / Delta H) (Methanobacterium thermoautotrophicum)).